We begin with the raw amino-acid sequence, 180 residues long: Insulin-like growth factor 2 (180 aa).

An N-terminal signal peptide occupies residues 1 to 24; sequence MGIPVGKSMLVLLISLAFALCCIA. Positions 25–52 are b; it reads AYRPSETLCGGELVDTLQFVCSDRGFYF. 3 disulfide bridges follow: C33/C71, C45/C84, and C70/C75. A c region spans residues 53–64; that stretch reads SRPSSRANRRSR. Residues 65–85 form an a region; the sequence is GIVEECCFRSCDLALLETYCA. Residues 86 to 91 form a d region; it reads TPAKSE. Residues 92–180 constitute a propeptide, e peptide; sequence RDVSTSQAVL…ASSEMSSNHQ (89 aa). The disordered stretch occupies residues 160–180; the sequence is VLPPKDPAHGGASSEMSSNHQ.

The protein belongs to the insulin family. Interacts with MYORG; this interaction is required for IGF2 secretion. Interacts with integrins ITGAV:ITGB3 and ITGA6:ITGB4; integrin-binding is required for IGF2 signaling. Interacts with IGFBP2. Proteolytically processed by PCSK4, proIGF2 is cleaved at Arg-128 and Arg-92 to generate big-IGF2 and mature IGF2.

Its subcellular location is the secreted. Functionally, the insulin-like growth factors possess growth-promoting activity. Major fetal growth hormone in mammals. Plays a key role in regulating fetoplacental development. IGF2 is influenced by placental lactogen. Also involved in tissue differentiation. In adults, involved in glucose metabolism in adipose tissue, skeletal muscle and liver. Acts as a ligand for integrin which is required for IGF2 signaling. Positively regulates myogenic transcription factor MYOD1 function by facilitating the recruitment of transcriptional coactivators, thereby controlling muscle terminal differentiation. Inhibits myoblast differentiation and modulates metabolism via increasing the mitochondrial respiration rate. Its function is as follows. Preptin undergoes glucose-mediated co-secretion with insulin, and acts as a physiological amplifier of glucose-mediated insulin secretion. Exhibits osteogenic properties by increasing osteoblast mitogenic activity through phosphoactivation of MAPK1 and MAPK3. In Rattus norvegicus (Rat), this protein is Insulin-like growth factor 2.